The chain runs to 78 residues: Ferredoxin (78 aa).

4Fe-4S ferredoxin-type domains follow at residues 2 to 29 and 30 to 59; these read FVITSPCIGEKAADCVETCPVDAIHEGP and DQYYIDPDLCIDCAACEPVCPVNAIYQEEF. Residues C8 and C16 each contribute to the [3Fe-4S] cluster site. Positions 20, 39, 42, and 45 each coordinate [4Fe-4S] cluster. C49 contacts [3Fe-4S] cluster.

[3Fe-4S] cluster serves as cofactor. It depends on [4Fe-4S] cluster as a cofactor.

Functionally, ferredoxins are iron-sulfur proteins that transfer electrons in a wide variety of metabolic reactions. The polypeptide is Ferredoxin (Alicyclobacillus acidocaldarius subsp. acidocaldarius (Bacillus acidocaldarius)).